Reading from the N-terminus, the 231-residue chain is Large ribosomal subunit protein uL1 (231 aa).

This sequence belongs to the universal ribosomal protein uL1 family. As to quaternary structure, part of the 50S ribosomal subunit.

Its function is as follows. Binds directly to 23S rRNA. The L1 stalk is quite mobile in the ribosome, and is involved in E site tRNA release. Protein L1 is also a translational repressor protein, it controls the translation of the L11 operon by binding to its mRNA. This chain is Large ribosomal subunit protein uL1, found in Ruthia magnifica subsp. Calyptogena magnifica.